Here is a 182-residue protein sequence, read N- to C-terminus: Ribosome-recycling factor (182 aa).

Belongs to the RRF family.

It is found in the cytoplasm. Functionally, responsible for the release of ribosomes from messenger RNA at the termination of protein biosynthesis. May increase the efficiency of translation by recycling ribosomes from one round of translation to another. This Prochlorococcus marinus (strain AS9601) protein is Ribosome-recycling factor.